The chain runs to 214 residues: Uridine kinase (214 aa).

15 to 22 (GASASGKS) contacts ATP.

This sequence belongs to the uridine kinase family.

Its subcellular location is the cytoplasm. The catalysed reaction is uridine + ATP = UMP + ADP + H(+). The enzyme catalyses cytidine + ATP = CMP + ADP + H(+). The protein operates within pyrimidine metabolism; CTP biosynthesis via salvage pathway; CTP from cytidine: step 1/3. It participates in pyrimidine metabolism; UMP biosynthesis via salvage pathway; UMP from uridine: step 1/1. The protein is Uridine kinase of Aeromonas salmonicida (strain A449).